A 215-amino-acid polypeptide reads, in one-letter code: Probable phosphoglycerate mutase GpmB (215 aa).

Substrate contacts are provided by residues 8–15 (RHGETVWN), 21–22 (QG), Arg58, 82–85 (ELNM), and 151–152 (GM). The Tele-phosphohistidine intermediate role is filled by His9. The active-site Proton donor/acceptor is the Glu82.

This sequence belongs to the phosphoglycerate mutase family. GpmB subfamily.

The enzyme catalyses (2R)-2-phosphoglycerate = (2R)-3-phosphoglycerate. The protein operates within carbohydrate degradation; glycolysis; pyruvate from D-glyceraldehyde 3-phosphate: step 3/5. This is Probable phosphoglycerate mutase GpmB from Yersinia enterocolitica serotype O:8 / biotype 1B (strain NCTC 13174 / 8081).